The primary structure comprises 977 residues: Monofunctional C1-tetrahydrofolate synthase, mitochondrial (977 aa).

The transit peptide at 1–31 directs the protein to the mitochondrion; sequence MSVRLPLLLRQLGRQQLPSGPACRLRELCRS. The interval 29–71 is disordered; that stretch reads CRSGSRSSSSGGGDPEGLRGRRLQDGQTFSSHGPGNPEAPGMD. The tract at residues 32 to 347 is methylenetetrahydrofolate dehydrogenase and cyclohydrolase; sequence GSRSSSSGGG…REQQHRRWRL (316 aa). Lys188 carries the N6-acetyllysine; alternate modification. The residue at position 188 (Lys188) is an N6-succinyllysine; alternate. The interval 348-977 is formyltetrahydrofolate synthetase; the sequence is HCLKLQPLSP…TETEQVKGLF (630 aa). Ser356 carries the post-translational modification Phosphoserine. Residue 422-429 coordinates ATP; sequence TPLGEGKS. Lys595 carries the post-translational modification N6-succinyllysine.

It in the N-terminal section; belongs to the tetrahydrofolate dehydrogenase/cyclohydrolase family. In the C-terminal section; belongs to the formate--tetrahydrofolate ligase family. Homodimer.

It localises to the mitochondrion. The enzyme catalyses (6S)-5,6,7,8-tetrahydrofolate + formate + ATP = (6R)-10-formyltetrahydrofolate + ADP + phosphate. It functions in the pathway one-carbon metabolism; tetrahydrofolate interconversion. Functionally, may provide the missing metabolic reaction required to link the mitochondria and the cytoplasm in the mammalian model of one-carbon folate metabolism complementing thus the enzymatic activities of MTHFD2. This is Monofunctional C1-tetrahydrofolate synthase, mitochondrial (Mthfd1l) from Mus musculus (Mouse).